Consider the following 212-residue polypeptide: Probable GTP-binding protein EngB (212 aa).

The EngB-type G domain occupies 40–212 (SLPEIAFVGK…KASLAKCIKA (173 aa)). Residues 48-55 (GKSNVGKS), 75-79 (GRTRQ), 93-96 (DLPG), 160-163 (TKSD), and 191-193 (VSS) contribute to the GTP site. Mg(2+) is bound by residues S55 and T77.

This sequence belongs to the TRAFAC class TrmE-Era-EngA-EngB-Septin-like GTPase superfamily. EngB GTPase family. Mg(2+) is required as a cofactor.

Its function is as follows. Necessary for normal cell division and for the maintenance of normal septation. The protein is Probable GTP-binding protein EngB of Rickettsia akari (strain Hartford).